The primary structure comprises 347 residues: S-adenosylmethionine:tRNA ribosyltransferase-isomerase (347 aa).

The protein belongs to the QueA family. In terms of assembly, monomer.

The protein resides in the cytoplasm. It catalyses the reaction 7-aminomethyl-7-carbaguanosine(34) in tRNA + S-adenosyl-L-methionine = epoxyqueuosine(34) in tRNA + adenine + L-methionine + 2 H(+). It functions in the pathway tRNA modification; tRNA-queuosine biosynthesis. Functionally, transfers and isomerizes the ribose moiety from AdoMet to the 7-aminomethyl group of 7-deazaguanine (preQ1-tRNA) to give epoxyqueuosine (oQ-tRNA). In Pseudomonas aeruginosa (strain UCBPP-PA14), this protein is S-adenosylmethionine:tRNA ribosyltransferase-isomerase.